Consider the following 360-residue polypeptide: Histidinol-phosphate aminotransferase (360 aa).

Lys223 carries the post-translational modification N6-(pyridoxal phosphate)lysine.

This sequence belongs to the class-II pyridoxal-phosphate-dependent aminotransferase family. Histidinol-phosphate aminotransferase subfamily. Homodimer. Pyridoxal 5'-phosphate serves as cofactor.

The enzyme catalyses L-histidinol phosphate + 2-oxoglutarate = 3-(imidazol-4-yl)-2-oxopropyl phosphate + L-glutamate. It functions in the pathway amino-acid biosynthesis; L-histidine biosynthesis; L-histidine from 5-phospho-alpha-D-ribose 1-diphosphate: step 7/9. In Bacillus velezensis (strain DSM 23117 / BGSC 10A6 / LMG 26770 / FZB42) (Bacillus amyloliquefaciens subsp. plantarum), this protein is Histidinol-phosphate aminotransferase.